The primary structure comprises 206 residues: Imidazole glycerol phosphate synthase subunit hisH (206 aa).

Positions 2-206 (KVGLVDYSMG…REVMKKAASL (205 aa)) constitute a Glutamine amidotransferase type-1 domain. C80 acts as the Nucleophile in catalysis. Residues H184 and E186 contribute to the active site.

As to quaternary structure, heterodimer of hisH and hisF.

The protein localises to the plastid. It localises to the chloroplast. The catalysed reaction is 5-[(5-phospho-1-deoxy-D-ribulos-1-ylimino)methylamino]-1-(5-phospho-beta-D-ribosyl)imidazole-4-carboxamide + L-glutamine = D-erythro-1-(imidazol-4-yl)glycerol 3-phosphate + 5-amino-1-(5-phospho-beta-D-ribosyl)imidazole-4-carboxamide + L-glutamate + H(+). It carries out the reaction L-glutamine + H2O = L-glutamate + NH4(+). It functions in the pathway amino-acid biosynthesis; L-histidine biosynthesis; L-histidine from 5-phospho-alpha-D-ribose 1-diphosphate: step 5/9. Its function is as follows. IGPS catalyzes the conversion of PRFAR and glutamine to IGP, AICAR and glutamate. The HisH subunit catalyzes the hydrolysis of glutamine to glutamate and ammonia as part of the synthesis of IGP and AICAR. The resulting ammonia molecule is channeled to the active site of HisF. This chain is Imidazole glycerol phosphate synthase subunit hisH, found in Cyanidioschyzon merolae (strain NIES-3377 / 10D) (Unicellular red alga).